The primary structure comprises 331 residues: tRNA N6-adenosine threonylcarbamoyltransferase (331 aa).

The Fe cation site is built by histidine 109, histidine 113, and tyrosine 130. Substrate contacts are provided by residues 130–134, aspartate 162, aspartate 183, and serine 262; that span reads YLSGG. A Fe cation-binding site is contributed by aspartate 290.

This sequence belongs to the KAE1 / TsaD family. Fe(2+) serves as cofactor.

It is found in the cytoplasm. It catalyses the reaction L-threonylcarbamoyladenylate + adenosine(37) in tRNA = N(6)-L-threonylcarbamoyladenosine(37) in tRNA + AMP + H(+). Its function is as follows. Required for the formation of a threonylcarbamoyl group on adenosine at position 37 (t(6)A37) in tRNAs that read codons beginning with adenine. Is probably involved in the transfer of the threonylcarbamoyl moiety of threonylcarbamoyl-AMP (TC-AMP) to the N6 group of A37. This Saccharolobus islandicus (strain M.16.27) (Sulfolobus islandicus) protein is tRNA N6-adenosine threonylcarbamoyltransferase.